The sequence spans 569 residues: Potassium-transporting ATPase potassium-binding subunit (569 aa).

Helical transmembrane passes span 11–31 (LLLALVFLTIKPLGLYIACVF), 64–84 (LAYTLAMLAFNAAGFLALYGI), 135–155 (AGLAVQNFLSAATGIAIALAV), 179–199 (LYLLLPMSIVLALVFVWMGIP), 258–278 (FNILAMMSITMALIYAFGKMV), 285–305 (WALIASVAVLLIAGIAAVYIA), 384–404 (GLYGLIVFCVLTVFVAGLMVG), 423–443 (MLAVLVLPFAILGFSAIAAVL), 490–510 (LGISMALGRFAYAVPVLAIAG), and 531–551 (LFVGLLVAIIIILGGLQYFPA).

Belongs to the KdpA family. The system is composed of three essential subunits: KdpA, KdpB and KdpC.

It is found in the cell inner membrane. Its function is as follows. Part of the high-affinity ATP-driven potassium transport (or Kdp) system, which catalyzes the hydrolysis of ATP coupled with the electrogenic transport of potassium into the cytoplasm. This subunit binds the periplasmic potassium ions and delivers the ions to the membrane domain of KdpB through an intramembrane tunnel. The sequence is that of Potassium-transporting ATPase potassium-binding subunit from Allorhizobium ampelinum (strain ATCC BAA-846 / DSM 112012 / S4) (Agrobacterium vitis (strain S4)).